We begin with the raw amino-acid sequence, 303 residues long: NAD kinase (303 aa).

Catalysis depends on D85, which acts as the Proton acceptor. Residues D85–G86, N159–D160, R187, D189, T200–S205, A224, and Q258 contribute to the NAD(+) site.

It belongs to the NAD kinase family. It depends on a divalent metal cation as a cofactor.

The protein resides in the cytoplasm. The catalysed reaction is NAD(+) + ATP = ADP + NADP(+) + H(+). In terms of biological role, involved in the regulation of the intracellular balance of NAD and NADP, and is a key enzyme in the biosynthesis of NADP. Catalyzes specifically the phosphorylation on 2'-hydroxyl of the adenosine moiety of NAD to yield NADP. The protein is NAD kinase of Variovorax paradoxus (strain S110).